The primary structure comprises 349 residues: Phosphoribosylformylglycinamidine cyclo-ligase (349 aa).

The protein belongs to the AIR synthase family.

The protein localises to the cytoplasm. The enzyme catalyses 2-formamido-N(1)-(5-O-phospho-beta-D-ribosyl)acetamidine + ATP = 5-amino-1-(5-phospho-beta-D-ribosyl)imidazole + ADP + phosphate + H(+). It participates in purine metabolism; IMP biosynthesis via de novo pathway; 5-amino-1-(5-phospho-D-ribosyl)imidazole from N(2)-formyl-N(1)-(5-phospho-D-ribosyl)glycinamide: step 2/2. In Methanococcus maripaludis (strain C5 / ATCC BAA-1333), this protein is Phosphoribosylformylglycinamidine cyclo-ligase.